Consider the following 191-residue polypeptide: Ribosomal RNA large subunit methyltransferase E (191 aa).

5 residues coordinate S-adenosyl-L-methionine: G49, W51, D66, D82, and D105. K145 serves as the catalytic Proton acceptor.

This sequence belongs to the class I-like SAM-binding methyltransferase superfamily. RNA methyltransferase RlmE family.

It localises to the cytoplasm. It catalyses the reaction uridine(2552) in 23S rRNA + S-adenosyl-L-methionine = 2'-O-methyluridine(2552) in 23S rRNA + S-adenosyl-L-homocysteine + H(+). Functionally, specifically methylates the uridine in position 2552 of 23S rRNA at the 2'-O position of the ribose in the fully assembled 50S ribosomal subunit. The sequence is that of Ribosomal RNA large subunit methyltransferase E from Archaeoglobus fulgidus (strain ATCC 49558 / DSM 4304 / JCM 9628 / NBRC 100126 / VC-16).